The sequence spans 361 residues: tRNA/tmRNA (uracil-C(5))-methyltransferase (361 aa).

S-adenosyl-L-methionine-binding residues include glutamine 183, tyrosine 211, asparagine 216, glutamate 232, and aspartate 294. Residue cysteine 319 is the Nucleophile of the active site. Catalysis depends on glutamate 353, which acts as the Proton acceptor.

This sequence belongs to the class I-like SAM-binding methyltransferase superfamily. RNA M5U methyltransferase family. TrmA subfamily.

The enzyme catalyses uridine(54) in tRNA + S-adenosyl-L-methionine = 5-methyluridine(54) in tRNA + S-adenosyl-L-homocysteine + H(+). It carries out the reaction uridine(341) in tmRNA + S-adenosyl-L-methionine = 5-methyluridine(341) in tmRNA + S-adenosyl-L-homocysteine + H(+). In terms of biological role, dual-specificity methyltransferase that catalyzes the formation of 5-methyluridine at position 54 (m5U54) in all tRNAs, and that of position 341 (m5U341) in tmRNA (transfer-mRNA). This is tRNA/tmRNA (uracil-C(5))-methyltransferase from Acinetobacter baylyi (strain ATCC 33305 / BD413 / ADP1).